A 31-amino-acid polypeptide reads, in one-letter code: Photosystem II reaction center protein T (31 aa).

Residues 3 to 23 (ALVYTFLLVGTLGIIFFAIFF) traverse the membrane as a helical segment.

This sequence belongs to the PsbT family. PSII is composed of 1 copy each of membrane proteins PsbA, PsbB, PsbC, PsbD, PsbE, PsbF, PsbH, PsbI, PsbJ, PsbK, PsbL, PsbM, PsbT, PsbY, PsbZ, Psb30/Ycf12, at least 3 peripheral proteins of the oxygen-evolving complex and a large number of cofactors. It forms dimeric complexes.

It is found in the plastid. The protein localises to the chloroplast thylakoid membrane. In terms of biological role, found at the monomer-monomer interface of the photosystem II (PS II) dimer, plays a role in assembly and dimerization of PSII. PSII is a light-driven water plastoquinone oxidoreductase, using light energy to abstract electrons from H(2)O, generating a proton gradient subsequently used for ATP formation. In Chlorella vulgaris (Green alga), this protein is Photosystem II reaction center protein T.